A 491-amino-acid chain; its full sequence is Probable cytosol aminopeptidase (491 aa).

Positions 263 and 268 each coordinate Mn(2+). Residue K275 is part of the active site. Residues D286, D345, and E347 each coordinate Mn(2+). The active site involves R349.

The protein belongs to the peptidase M17 family. It depends on Mn(2+) as a cofactor.

The protein resides in the cytoplasm. It carries out the reaction Release of an N-terminal amino acid, Xaa-|-Yaa-, in which Xaa is preferably Leu, but may be other amino acids including Pro although not Arg or Lys, and Yaa may be Pro. Amino acid amides and methyl esters are also readily hydrolyzed, but rates on arylamides are exceedingly low.. It catalyses the reaction Release of an N-terminal amino acid, preferentially leucine, but not glutamic or aspartic acids.. In terms of biological role, presumably involved in the processing and regular turnover of intracellular proteins. Catalyzes the removal of unsubstituted N-terminal amino acids from various peptides. In Haemophilus influenzae (strain PittGG), this protein is Probable cytosol aminopeptidase.